The primary structure comprises 595 residues: (E)-beta-ocimene synthase, chloroplastic (595 aa).

Residues 1-32 (MSTISINLMSIIRNPLHSKSKRALINKHPSSS) constitute a chloroplast transit peptide. Mn(2+) contacts are provided by aspartate 350 and aspartate 354. Positions 350–354 (DDVYD) match the DDXXD motif motif. 2 homodimerization regions span residues 356–362 (YGTLDEL) and 428–465 (EEEW…LSIP). Asparagine 493 and glutamate 501 together coordinate Mn(2+).

Belongs to the terpene synthase family. Homodimer. Requires Mn(2+) as cofactor. The cofactor is Mg(2+). In terms of tissue distribution, expressed in peltate glandular trichomes. Present in flowers, leaves and stems.

It localises to the plastid. The protein localises to the chloroplast. The catalysed reaction is (2E)-geranyl diphosphate = (E)-beta-ocimene + diphosphate. The protein operates within secondary metabolite biosynthesis; terpenoid biosynthesis. In terms of biological role, involved in the biosynthesis of monoterpenes natural products. Monoterpene synthase that catalyzes mainly the formation of (E)-beta-ocimene and minor amounts of other monoterpenes (e.g. myrcene, (Z)-beta-ocimene, alpha- and gamma-terpinene) from geranyl diphosphate (GPP). The chain is (E)-beta-ocimene synthase, chloroplastic from Origanum vulgare (Wild marjoram).